A 707-amino-acid chain; its full sequence is DNA-binding protein RFX2 (707 aa).

S33 bears the Phosphoserine mark. A DNA-binding region (RFX-type winged-helix) is located at residues 204–279 (HLQWLLDNYE…YHYYGIRLKP (76 aa)). The interval 297-337 (QQPVHQKPRYRPAQKTDSLGESGSHSSLHSTPEQAMAAQSQ) is disordered. Residues 315–337 (LGESGSHSSLHSTPEQAMAAQSQ) show a composition bias toward low complexity. Position 420 is a phosphoserine (S420).

It belongs to the RFX family. Homodimer; probably only forms homodimers in testis. Heterodimer; heterodimerizes with RFX1 and RFX3.

The protein resides in the nucleus. It localises to the cytoplasm. Transcription factor that acts as a key regulator of spermatogenesis. Acts by regulating expression of genes required for the haploid phase during spermiogenesis, such as genes required for cilium assembly and function. Recognizes and binds the X-box, a regulatory motif with DNA sequence 5'-GTNRCC(0-3N)RGYAAC-3' present on promoters. Probably activates transcription of the testis-specific histone gene H1-6. The sequence is that of DNA-binding protein RFX2 (RFX2) from Bos taurus (Bovine).